The chain runs to 242 residues: Small ribosomal subunit protein uS3 (242 aa).

Positions 39 to 110 (IRKFIHKKYG…QVRINVVEVE (72 aa)) constitute a KH type-2 domain. The disordered stretch occupies residues 221–242 (GASPRRRASRRPQQFEDRSNEG). The segment covering 233–242 (QQFEDRSNEG) has biased composition (basic and acidic residues).

This sequence belongs to the universal ribosomal protein uS3 family. In terms of assembly, part of the 30S ribosomal subunit. Forms a tight complex with proteins S10 and S14.

Functionally, binds the lower part of the 30S subunit head. Binds mRNA in the 70S ribosome, positioning it for translation. In Parasynechococcus marenigrum (strain WH8102), this protein is Small ribosomal subunit protein uS3.